We begin with the raw amino-acid sequence, 436 residues long: Glutamyl-tRNA reductase (436 aa).

Residues 56–59, S114, 119–121, and Q125 each bind substrate; these read TCNR and EAQ. The active-site Nucleophile is the C57. Position 194–199 (194–199) interacts with NADP(+); that stretch reads GAGEMI.

It belongs to the glutamyl-tRNA reductase family. In terms of assembly, homodimer.

It catalyses the reaction (S)-4-amino-5-oxopentanoate + tRNA(Glu) + NADP(+) = L-glutamyl-tRNA(Glu) + NADPH + H(+). It participates in porphyrin-containing compound metabolism; protoporphyrin-IX biosynthesis; 5-aminolevulinate from L-glutamyl-tRNA(Glu): step 1/2. In terms of biological role, catalyzes the NADPH-dependent reduction of glutamyl-tRNA(Glu) to glutamate 1-semialdehyde (GSA). This chain is Glutamyl-tRNA reductase, found in Acidovorax sp. (strain JS42).